Reading from the N-terminus, the 366-residue chain is Probable UDP-arabinopyranose mutase 2 (366 aa).

The short motif at aspartate 104–aspartate 106 is the DXD motif element. A glycan (N-linked (Glc...) arginine) is linked at arginine 152.

This sequence belongs to the RGP family. In terms of assembly, homopentamer or homohexamer. The cofactor is Mn(2+). Mg(2+) is required as a cofactor. In terms of processing, reversibly glycosylated by UDP-glucose, UDP-xylose and UDP-galactose, but not UDP-mannose. In terms of tissue distribution, expressed in all tissues tested, including root, tuber, leaf, petiole, shoot, stolon and stem.

It localises to the secreted. Its subcellular location is the cell wall. The protein resides in the cell junction. It is found in the plasmodesma. The protein localises to the golgi apparatus. The enzyme catalyses UDP-beta-L-arabinofuranose = UDP-beta-L-arabinopyranose. Probable UDP-L-arabinose mutase involved in the biosynthesis of cell wall non-cellulosic polysaccharides. Was initially shown to possess an autoglycosylating activity which is dependent on the presence of UDP-glucose and manganese. The protein is Probable UDP-arabinopyranose mutase 2 of Solanum tuberosum (Potato).